We begin with the raw amino-acid sequence, 289 residues long: Glycine--tRNA ligase alpha subunit (289 aa).

Belongs to the class-II aminoacyl-tRNA synthetase family. In terms of assembly, tetramer of two alpha and two beta subunits.

Its subcellular location is the cytoplasm. It catalyses the reaction tRNA(Gly) + glycine + ATP = glycyl-tRNA(Gly) + AMP + diphosphate. The sequence is that of Glycine--tRNA ligase alpha subunit from Rickettsia typhi (strain ATCC VR-144 / Wilmington).